Reading from the N-terminus, the 525-residue chain is Peptide chain release factor 3 (525 aa).

The region spanning Glu11–Glu279 is the tr-type G domain. Residues Ser20 to Thr27, Asp88 to His92, and Asn142 to Asp145 contribute to the GTP site.

Belongs to the TRAFAC class translation factor GTPase superfamily. Classic translation factor GTPase family. PrfC subfamily.

It is found in the cytoplasm. Functionally, increases the formation of ribosomal termination complexes and stimulates activities of RF-1 and RF-2. It binds guanine nucleotides and has strong preference for UGA stop codons. It may interact directly with the ribosome. The stimulation of RF-1 and RF-2 is significantly reduced by GTP and GDP, but not by GMP. This chain is Peptide chain release factor 3, found in Latilactobacillus sakei subsp. sakei (strain 23K) (Lactobacillus sakei subsp. sakei).